The chain runs to 56 residues: Large ribosomal subunit protein bL32 (56 aa).

Residues 1–16 (MAVQKSKKSRSMRGMR) are compositionally biased toward basic residues. The disordered stretch occupies residues 1-22 (MAVQKSKKSRSMRGMRRSHDAL).

It belongs to the bacterial ribosomal protein bL32 family.

The protein is Large ribosomal subunit protein bL32 of Aliivibrio salmonicida (strain LFI1238) (Vibrio salmonicida (strain LFI1238)).